Consider the following 192-residue polypeptide: Transmembrane protein 11, mitochondrial (192 aa).

The disordered stretch occupies residues 1 to 20 (MAAWGRRRLGPGSSGGSARE). The next 2 helical transmembrane spans lie at 84 to 100 (TAVLAGTACLFTPLALP) and 107 to 124 (ISLPAGVLSLACCTLYGI).

It belongs to the TMEM11 family. As to quaternary structure, associates with the mitochondrial contact site and cristae organizing system (MICOS) complex, composed of at least MICOS10/MIC10, CHCHD3/MIC19, CHCHD6/MIC25, APOOL/MIC27, IMMT/MIC60, APOO/MIC23/MIC26 and QIL1/MIC13. This complex was also known under the names MINOS or MitOS complex. The MICOS complex associates with mitochondrial outer membrane proteins SAMM50, MTX1, MTX2 and DNAJC11, mitochondrial inner membrane protein TMEM11 and with HSPA9. Interacts with IMMT/MIC60.

The protein resides in the mitochondrion inner membrane. In terms of biological role, plays a role in mitochondrial morphogenesis. The protein is Transmembrane protein 11, mitochondrial (TMEM11) of Homo sapiens (Human).